A 317-amino-acid polypeptide reads, in one-letter code: R-spondin-3 (317 aa).

The first 20 residues, 1–20 (MQLQLISIVLILHFMEYTNC), serve as a signal peptide directing secretion. FU repeat units lie at residues 34 to 86 (SGVS…GFYG), 92 to 135 (RNDC…GLVP), and 139 to 183 (KKEC…EFEP). 11 disulfide bridges follow: Cys41–Cys48, Cys45–Cys54, Cys57–Cys76, Cys80–Cys95, Cys98–Cys105, Cys102–Cys111, Cys114–Cys125, Cys129–Cys189, Cys195–Cys237, Cys206–Cys213, and Cys246–Cys253. Asn184 is a glycosylation site (N-linked (GlcNAc...) asparagine). The region spanning 194 to 254 (HCEVSEWSEW…ECFVKKKRCK (61 aa)) is the TSP type-1 domain. Positions 251-268 (KRCKPPKGQRRGEKKKRF) are enriched in basic residues. The segment at 251–317 (KRCKPPKGQR…RDQSRDAGTV (67 aa)) is disordered. The segment covering 274–303 (VTAEARRERKREREKETIDREESENRNKTE) has biased composition (basic and acidic residues). The N-linked (GlcNAc...) asparagine glycan is linked to Asn300.

The protein belongs to the R-spondin family. In terms of assembly, binds heparin.

It localises to the secreted. In terms of biological role, activator of the canonical Wnt signaling pathway by acting as a ligand for lgr4-6 receptors, which acts as a key regulator of angiogenesis. Upon binding to lgr4-6 (lgr4, lgr5 or lgr6), lgr4-6 associate with phosphorylated lrp6 and frizzled receptors that are activated by extracellular Wnt receptors, triggering the canonical Wnt signaling pathway to increase expression of target genes. Acts both in the canonical. Wnt/beta-catenin-dependent pathway and in non-canonical Wnt signaling pathway. Acts as a key regulator of angiogenesis by controlling vascular stability and pruning: acts by activating the non-canonical Wnt signaling pathway in endothelial cells. Can also amplify Wnt signaling pathway independently of LGR4-6 receptors, possibly by acting as a direct antagonistic ligand to RNF43 and ZNRF3. This is R-spondin-3 (rspo3) from Danio rerio (Zebrafish).